Consider the following 1097-residue polypeptide: DNA-directed RNA polymerase subunit beta (1097 aa).

Residues 1072–1097 form a disordered region; that stretch reads QDVNPRRSTPSRPTYESLGVADYDED.

This sequence belongs to the RNA polymerase beta chain family. As to quaternary structure, in cyanobacteria the RNAP catalytic core is composed of 2 alpha, 1 beta, 1 beta', 1 gamma and 1 omega subunit. When a sigma factor is associated with the core the holoenzyme is formed, which can initiate transcription.

The enzyme catalyses RNA(n) + a ribonucleoside 5'-triphosphate = RNA(n+1) + diphosphate. In terms of biological role, DNA-dependent RNA polymerase catalyzes the transcription of DNA into RNA using the four ribonucleoside triphosphates as substrates. In Prochlorococcus marinus (strain MIT 9303), this protein is DNA-directed RNA polymerase subunit beta.